We begin with the raw amino-acid sequence, 456 residues long: MLNVVILAAGLGKRMQSDLPKVLHSLAGKPMLEHVLDSASQLEPGRIVVVVGHGADRVRGAYEGRAGLSFALQQPQQGTGHAVQQAVPLLQEDGKDDVTLVLYGDVPLVQPDTLRRLLQARGQGAAVLTELLDDATGYGRIVRNEQGQVQRIVEHKDASEAERAIREVNTGILAAPTGRLKDWLSRIDNNNAQGEYYLTDVVGLAVADGVPVGAAQPSAGWETLGVNSRVQQAELERRWQQEQARRQLEAGVTLADPARFDVRGTLTCGRDVFIDVGCVFEGKVELADGVRVGPHCVLRDVSVGAGTHIDAYSHVQQATVGRDARIGPYARLRPGASLGDRTHVGNFVEIKNSVLDADSKANHLAYIGDADIGARVNVGAGTITCNYDGANKHRTIIEDDAFIGSDTQLVAPVRVGRGATLGAGTTLTRDAPAGQLTVSRARQTTIEGWQRPQKKS.

Positions 1-229 are pyrophosphorylase; sequence MLNVVILAAG…GWETLGVNSR (229 aa). UDP-N-acetyl-alpha-D-glucosamine-binding positions include 7–10, Lys21, Gln73, 78–79, 103–105, Gly139, Glu154, Asn169, and Asn227; these read LAAG, GT, and YGD. Asp105 contributes to the Mg(2+) binding site. Mg(2+) is bound at residue Asn227. The interval 230–250 is linker; the sequence is VQQAELERRWQQEQARRQLEA. Positions 251–456 are N-acetyltransferase; that stretch reads GVTLADPARF…EGWQRPQKKS (206 aa). Residues Arg333 and Lys351 each coordinate UDP-N-acetyl-alpha-D-glucosamine. The active-site Proton acceptor is His363. Tyr366 and Asn377 together coordinate UDP-N-acetyl-alpha-D-glucosamine. Residues Ala380, 386 to 387, Ser405, Ala423, and Arg440 contribute to the acetyl-CoA site; that span reads NY.

It in the N-terminal section; belongs to the N-acetylglucosamine-1-phosphate uridyltransferase family. This sequence in the C-terminal section; belongs to the transferase hexapeptide repeat family. Homotrimer. Mg(2+) is required as a cofactor.

Its subcellular location is the cytoplasm. The catalysed reaction is alpha-D-glucosamine 1-phosphate + acetyl-CoA = N-acetyl-alpha-D-glucosamine 1-phosphate + CoA + H(+). The enzyme catalyses N-acetyl-alpha-D-glucosamine 1-phosphate + UTP + H(+) = UDP-N-acetyl-alpha-D-glucosamine + diphosphate. Its pathway is nucleotide-sugar biosynthesis; UDP-N-acetyl-alpha-D-glucosamine biosynthesis; N-acetyl-alpha-D-glucosamine 1-phosphate from alpha-D-glucosamine 6-phosphate (route II): step 2/2. The protein operates within nucleotide-sugar biosynthesis; UDP-N-acetyl-alpha-D-glucosamine biosynthesis; UDP-N-acetyl-alpha-D-glucosamine from N-acetyl-alpha-D-glucosamine 1-phosphate: step 1/1. It participates in bacterial outer membrane biogenesis; LPS lipid A biosynthesis. Its function is as follows. Catalyzes the last two sequential reactions in the de novo biosynthetic pathway for UDP-N-acetylglucosamine (UDP-GlcNAc). The C-terminal domain catalyzes the transfer of acetyl group from acetyl coenzyme A to glucosamine-1-phosphate (GlcN-1-P) to produce N-acetylglucosamine-1-phosphate (GlcNAc-1-P), which is converted into UDP-GlcNAc by the transfer of uridine 5-monophosphate (from uridine 5-triphosphate), a reaction catalyzed by the N-terminal domain. In Bordetella petrii (strain ATCC BAA-461 / DSM 12804 / CCUG 43448), this protein is Bifunctional protein GlmU.